The sequence spans 417 residues: NADH-quinone oxidoreductase subunit D (417 aa).

The protein belongs to the complex I 49 kDa subunit family. In terms of assembly, NDH-1 is composed of 14 different subunits. Subunits NuoB, C, D, E, F, and G constitute the peripheral sector of the complex.

It localises to the cell inner membrane. It catalyses the reaction a quinone + NADH + 5 H(+)(in) = a quinol + NAD(+) + 4 H(+)(out). In terms of biological role, NDH-1 shuttles electrons from NADH, via FMN and iron-sulfur (Fe-S) centers, to quinones in the respiratory chain. The immediate electron acceptor for the enzyme in this species is believed to be ubiquinone. Couples the redox reaction to proton translocation (for every two electrons transferred, four hydrogen ions are translocated across the cytoplasmic membrane), and thus conserves the redox energy in a proton gradient. This Paraburkholderia phymatum (strain DSM 17167 / CIP 108236 / LMG 21445 / STM815) (Burkholderia phymatum) protein is NADH-quinone oxidoreductase subunit D.